We begin with the raw amino-acid sequence, 428 residues long: C4-dicarboxylate transport protein (428 aa).

Transmembrane regions (helical) follow at residues 8-28 (SLYF…HFYP), 44-64 (LIKM…IAGM), 76-96 (VALL…LIIV), 142-162 (IGAF…LFGF), 184-206 (VIFG…AMAF), 222-242 (LIIC…GSIA), 326-346 (IVHQ…AAGV), and 352-372 (IVLA…LALI).

It belongs to the dicarboxylate/amino acid:cation symporter (DAACS) (TC 2.A.23) family.

The protein localises to the cell inner membrane. In terms of biological role, responsible for the transport of dicarboxylates such as succinate, fumarate, and malate from the periplasm across the membrane. In Shigella flexneri, this protein is C4-dicarboxylate transport protein.